The primary structure comprises 548 residues: Alpha-1,3-mannosyl-glycoprotein 4-beta-N-acetylglucosaminyltransferase B (548 aa).

Over 1–7 (MRLRNGT) the chain is Cytoplasmic. The chain crosses the membrane as a helical; Signal-anchor for type II membrane protein span at residues 8 to 28 (FLTLLLFCLCAFLSLSWYAAL). The Lumenal portion of the chain corresponds to 29-548 (SGQKGDVVDV…LSEIFLKKAD (520 aa)). Residues 36–83 (VDVYQREFLALRDRLHAAEQESLKRSKELNLVLDEIKRAVSERQALRD) adopt a coiled-coil conformation. N-linked (GlcNAc...) asparagine glycosylation is found at N87 and N103.

This sequence belongs to the glycosyltransferase 54 family. In terms of assembly, interacts with SLC35A3. A divalent metal cation is required as a cofactor. N-glycosylated. In terms of tissue distribution, widely expressed. Strongly overexpressed in pancreatic cancer.

The protein localises to the golgi apparatus membrane. The enzyme catalyses an N(4)-{beta-D-GlcNAc-(1-&gt;2)-alpha-D-Man-(1-&gt;3)-[alpha-D-Man-(1-&gt;6)]-beta-D-Man-(1-&gt;4)-beta-D-GlcNAc-(1-&gt;4)-beta-D-GlcNAc}-L-asparaginyl-[protein] + UDP-N-acetyl-alpha-D-glucosamine = an N(4)-{beta-D-GlcNAc-(1-&gt;2)-[beta-D-GlcNAc-(1-&gt;4)]-alpha-D-Man-(1-&gt;3)-[alpha-D-Man-(1-&gt;6)]-beta-D-Man-(1-&gt;4)-beta-D-GlcNAc-(1-&gt;4)-beta-D-GlcNAc}-L-asparaginyl-[protein] + UDP + H(+). It carries out the reaction N(4)-{beta-D-GlcNAc-(1-&gt;2)-alpha-D-Man-(1-&gt;3)-[beta-D-GlcNAc-(1-&gt;2)-alpha-D-Man-(1-&gt;6)]-beta-D-Man-(1-&gt;4)-beta-D-GlcNAc-(1-&gt;4)-beta-D-GlcNAc}-L-asparaginyl-[protein] + UDP-N-acetyl-alpha-D-glucosamine = N(4)-{beta-D-GlcNAc-(1-&gt;2)-[beta-D-GlcNAc-(1-&gt;4)]-alpha-D-Man-(1-&gt;3)-[beta-D-GlcNAc-(1-&gt;2)-alpha-D-Man-(1-&gt;6)]-beta-D-Man-(1-&gt;4)-beta-D-GlcNAc-(1-&gt;4)-beta-D-GlcNAc}-L-asparaginyl-[protein] + UDP + H(+). The catalysed reaction is an N(4)-{beta-D-GlcNAc-(1-&gt;2)-alpha-D-Man-(1-&gt;3)-[beta-D-GlcNAc-(1-&gt;2)-[beta-D-GlcNAc-(1-&gt;6)]-alpha-D-Man-(1-&gt;6)]-beta-D-Man-(1-&gt;4)-beta-D-GlcNAc-(1-&gt;4)-beta-D-GlcNAc}-L-asparaginyl-[protein] + UDP-N-acetyl-alpha-D-glucosamine = an N(4)-{beta-D-GlcNAc-(1-&gt;2)-[beta-D-GlcNAc-(1-&gt;4)]-alpha-D-Man-(1-&gt;3)-[beta-D-GlcNAc-(1-&gt;2)-[beta-D-GlcNAc-(1-&gt;6)]-alpha-D-Man-(1-&gt;6)]-beta-D-Man-(1-&gt;4)-beta-D-GlcNAc-(1-&gt;4)-beta-D-GlcNAc}-L-asparaginyl-[protein] + UDP + H(+). It catalyses the reaction an N(4)-{beta-D-GlcNAc-(1-&gt;2)-alpha-D-Man-(1-&gt;3)-[beta-D-GlcNAc-(1-&gt;2)-alpha-D-Man-(1-&gt;6)]-beta-D-Man-(1-&gt;4)-beta-D-GlcNAc-(1-&gt;4)-[alpha-L-Fuc-(1-&gt;6)]-beta-D-GlcNAc}-L-asparaginyl-[protein] + UDP-N-acetyl-alpha-D-glucosamine = N(4)-{beta-D-GlcNAc-(1-&gt;2)-[beta-D-GlcNAc-(1-&gt;4)]-alpha-D-Man-(1-&gt;3)-[beta-D-GlcNAc-(1-&gt;2)-alpha-D-Man-(1-&gt;6)]-beta-D-Man-(1-&gt;4)-beta-D-GlcNAc-(1-&gt;4)-[alpha-L-Fuc-(1-&gt;6)]-beta-D-GlcNAc}-asparaginyl-[protein] + UDP + H(+). The enzyme catalyses an N(4)-{beta-D-GlcNAc-(1-&gt;2)-alpha-D-Man-(1-&gt;3)-[beta-D-Gal-(1-&gt;4)-beta-D-GlcNAc-(1-&gt;2)-alpha-D-Man-(1-&gt;6)]-beta-D-Man-(1-&gt;4)-beta-D-GlcNAc-(1-&gt;4)-beta-D-GlcNAc}-L-asparaginyl-[protein] + UDP-N-acetyl-alpha-D-glucosamine = an N(4)-{beta-D-GlcNAc-(1-&gt;2)-[beta-D-GlcNAc-(1-&gt;4)]-alpha-D-Man-(1-&gt;3)-[beta-D-Gal-(1-&gt;4)-beta-D-GlcNAc-(1-&gt;2)-alpha-D-Man-(1-&gt;6)]-beta-D-Man-(1-&gt;4)-beta-D-GlcNAc-(1-&gt;4)-beta-D-GlcNAc}-L-asparaginyl-[protein] + UDP + H(+). It carries out the reaction N(4)-{beta-D-GlcNAc-(1-&gt;2)-alpha-D-Man-(1-&gt;3)-[alpha-D-Man-(1-&gt;3)-{alpha-D-Man-(1-&gt;6)}-alpha-D-Man-(1-&gt;6)]-beta-D-Man-(1-&gt;4)-beta-D-GlcNAc-(1-&gt;4)-beta-D-GlcNAc}-asparaginyl-[protein] + UDP-N-acetyl-alpha-D-glucosamine = N(4)-{beta-D-GlcNAc-(1-&gt;2)-[beta-D-GlcNAc-(1-&gt;4)]-alpha-D-Man-(1-&gt;3)-[alpha-D-Man-(1-&gt;3)-{alpha-D-Man-(1-&gt;6)}-alpha-D-Man-(1-&gt;6)]-beta-D-Man-(1-&gt;4)-beta-D-GlcNAc-(1-&gt;4)-beta-D-GlcNAc}-asparaginyl-[protein] + UDP + H(+). The catalysed reaction is N(4)-{beta-D-GlcNAc-(1-&gt;2)-alpha-D-Man-(1-&gt;3)-beta-D-Man-(1-&gt;4)-beta-D-GlcNAc-(1-&gt;4)-beta-D-GlcNAc}-asparaginyl-[protein] + UDP-N-acetyl-alpha-D-glucosamine = N(4)-{beta-D-GlcNAc-(1-&gt;2)-[beta-D-GlcNAc-(1-&gt;4)]-alpha-D-Man-(1-&gt;3)-beta-D-Man-(1-&gt;4)-beta-D-GlcNAc-(1-&gt;4)-beta-D-GlcNAc}-asparaginyl-[protein] + UDP + H(+). It participates in protein modification; protein glycosylation. Glycosyltransferase that catalyzes the transfer of GlcNAc from UDP-GlcNAc to the GlcNAcbeta1-2Manalpha1-3 arm of the core structure of N-linked glycans through a beta1-4 linkage and participates in the production of tri- and tetra-antennary N-linked sugar chains. Prefers complex-type N-glycans over hybrid-types. Has lower affinities for donors or acceptors than MGAT4A, suggesting that, under physiological conditions, it is not the main contributor in N-glycan biosynthesis. In Homo sapiens (Human), this protein is Alpha-1,3-mannosyl-glycoprotein 4-beta-N-acetylglucosaminyltransferase B.